Consider the following 48-residue polypeptide: Delta-actitoxin-Bgr2b (48 aa).

3 disulfide bridges follow: C4–C45, C6–C35, and C28–C46.

This sequence belongs to the sea anemone sodium channel inhibitory toxin family. Type I subfamily.

The protein localises to the secreted. Its subcellular location is the nematocyst. Functionally, binds voltage-dependently at site 3 of sodium channels (Nav) and inhibits the inactivation of the activated channels, thereby blocking neuronal transmission. Has effect on SCN4A/SCN1B, and SCN5A/SCN1B, has no effect on SCN2A/SCN1B, and SCN10A/SCN1B. Possesses the highest efficacy for the insect sodium channel para/tipE. Also interacts with sodium channels in cardiac cells. Shows lethality to crabs. The chain is Delta-actitoxin-Bgr2b from Bunodosoma granuliferum (Red warty sea anemone).